The chain runs to 530 residues: uncharacterized protein (530 aa).

A coiled-coil region spans residues 485 to 529 (SKEENREIKLSIRENKEKQRKKSVEKSVSKLQNQLNRLLNKNTIE).

This is an uncharacterized protein from Acanthamoeba polyphaga (Amoeba).